The sequence spans 406 residues: Serine/threonine transporter SstT (406 aa).

9 consecutive transmembrane segments (helical) span residues 11-31, 45-65, 79-99, 141-161, 185-205, 216-236, 298-318, 330-350, and 357-377; these read IGLV…GWLM, FVGA…MAAI, VLIM…VASF, AIAN…GLAL, FVIA…IAET, LLTI…PIIV, MAGA…TLGV, VVAT…LLLI, and FNIP…IGVV.

It belongs to the dicarboxylate/amino acid:cation symporter (DAACS) (TC 2.A.23) family.

It localises to the cell inner membrane. It carries out the reaction L-serine(in) + Na(+)(in) = L-serine(out) + Na(+)(out). The catalysed reaction is L-threonine(in) + Na(+)(in) = L-threonine(out) + Na(+)(out). Its function is as follows. Involved in the import of serine and threonine into the cell, with the concomitant import of sodium (symport system). This chain is Serine/threonine transporter SstT, found in Psychrobacter sp. (strain PRwf-1).